A 426-amino-acid polypeptide reads, in one-letter code: Enolase (426 aa).

A (2R)-2-phosphoglycerate-binding site is contributed by Gln163. Residue Glu205 is the Proton donor of the active site. Residues Asp242, Glu283, and Asp310 each coordinate Mg(2+). (2R)-2-phosphoglycerate contacts are provided by Lys335, Arg364, Ser365, and Lys386. Catalysis depends on Lys335, which acts as the Proton acceptor.

Belongs to the enolase family. Mg(2+) is required as a cofactor.

It localises to the cytoplasm. Its subcellular location is the secreted. The protein localises to the cell surface. It carries out the reaction (2R)-2-phosphoglycerate = phosphoenolpyruvate + H2O. The protein operates within carbohydrate degradation; glycolysis; pyruvate from D-glyceraldehyde 3-phosphate: step 4/5. Catalyzes the reversible conversion of 2-phosphoglycerate (2-PG) into phosphoenolpyruvate (PEP). It is essential for the degradation of carbohydrates via glycolysis. This Paenarthrobacter aurescens (strain TC1) protein is Enolase.